Reading from the N-terminus, the 347-residue chain is GMP reductase (347 aa).

108 to 131 (ADFEKTKQILAQSPALNFVCIDVA) is a binding site for NADP(+). Residues Gly181 and Gly183 each coordinate K(+). Cys186 acts as the Thioimidate intermediate in catalysis. 216–239 (IVSDGGCTMPGDVAKAFGGGADFV) is an NADP(+) binding site.

This sequence belongs to the IMPDH/GMPR family. GuaC type 1 subfamily. Homotetramer.

The catalysed reaction is IMP + NH4(+) + NADP(+) = GMP + NADPH + 2 H(+). In terms of biological role, catalyzes the irreversible NADPH-dependent deamination of GMP to IMP. It functions in the conversion of nucleobase, nucleoside and nucleotide derivatives of G to A nucleotides, and in maintaining the intracellular balance of A and G nucleotides. In Citrobacter koseri (strain ATCC BAA-895 / CDC 4225-83 / SGSC4696), this protein is GMP reductase.